The following is a 539-amino-acid chain: Chaperonin GroEL (539 aa).

ATP contacts are provided by residues 29 to 32 (TLGP), 86 to 90 (DGTTT), Gly-413, 477 to 479 (NAA), and Asp-493.

This sequence belongs to the chaperonin (HSP60) family. In terms of assembly, forms a cylinder of 14 subunits composed of two heptameric rings stacked back-to-back. Interacts with the co-chaperonin GroES.

The protein localises to the cytoplasm. The catalysed reaction is ATP + H2O + a folded polypeptide = ADP + phosphate + an unfolded polypeptide.. Together with its co-chaperonin GroES, plays an essential role in assisting protein folding. The GroEL-GroES system forms a nano-cage that allows encapsulation of the non-native substrate proteins and provides a physical environment optimized to promote and accelerate protein folding. This is Chaperonin GroEL from Leifsonia xyli subsp. xyli (strain CTCB07).